Consider the following 98-residue polypeptide: Citrate lyase acyl carrier protein 1 (98 aa).

Serine 14 bears the O-(phosphoribosyl dephospho-coenzyme A)serine mark.

It belongs to the CitD family. As to quaternary structure, oligomer with a subunit composition of (alpha,beta,gamma)6.

Its subcellular location is the cytoplasm. Its function is as follows. Covalent carrier of the coenzyme of citrate lyase. In Salmonella paratyphi A (strain ATCC 9150 / SARB42), this protein is Citrate lyase acyl carrier protein 1.